We begin with the raw amino-acid sequence, 322 residues long: Undecaprenyl-phosphate 4-deoxy-4-formamido-L-arabinose transferase (322 aa).

Residues 1–235 lie on the Cytoplasmic side of the membrane; sequence MFEIHPVKKV…TCLTTTPLRM (235 aa). Residues 236–256 form a helical membrane-spanning segment; it reads LSLLGSIIAIGGFSIAVLLVI. The Periplasmic portion of the chain corresponds to 257–269; sequence LRLTFGPQWAAEG. Residues 270-290 traverse the membrane as a helical segment; that stretch reads VFMLFAVLFTFIGAQFIGMGL. The Cytoplasmic portion of the chain corresponds to 291 to 322; the sequence is LGEYIGRIYTDVRARPRYFVQQVIRPSSKENE.

The protein belongs to the glycosyltransferase 2 family.

It localises to the cell inner membrane. The catalysed reaction is UDP-4-deoxy-4-formamido-beta-L-arabinose + di-trans,octa-cis-undecaprenyl phosphate = 4-deoxy-4-formamido-alpha-L-arabinopyranosyl di-trans,octa-cis-undecaprenyl phosphate + UDP. It functions in the pathway glycolipid biosynthesis; 4-amino-4-deoxy-alpha-L-arabinose undecaprenyl phosphate biosynthesis; 4-amino-4-deoxy-alpha-L-arabinose undecaprenyl phosphate from UDP-4-deoxy-4-formamido-beta-L-arabinose and undecaprenyl phosphate: step 1/2. It participates in bacterial outer membrane biogenesis; lipopolysaccharide biosynthesis. Functionally, catalyzes the transfer of 4-deoxy-4-formamido-L-arabinose from UDP to undecaprenyl phosphate. The modified arabinose is attached to lipid A and is required for resistance to polymyxin and cationic antimicrobial peptides. This Shigella flexneri serotype 5b (strain 8401) protein is Undecaprenyl-phosphate 4-deoxy-4-formamido-L-arabinose transferase.